The sequence spans 173 residues: uncharacterized protein (173 aa).

Residues 49–72 are disordered; the sequence is PTRSGRTSNSGNRGPVMTSTSSIN.

This is an uncharacterized protein from Human adenovirus B serotype 7 (HAdV-7).